Here is a 220-residue protein sequence, read N- to C-terminus: uncharacterized protein (220 aa).

A helical transmembrane segment spans residues 10–30; that stretch reads FFIIGGVILSIGLILFFLLGF.

It is found in the membrane. This is an uncharacterized protein from Methanocaldococcus jannaschii (strain ATCC 43067 / DSM 2661 / JAL-1 / JCM 10045 / NBRC 100440) (Methanococcus jannaschii).